Here is a 500-residue protein sequence, read N- to C-terminus: NAD(P)H-quinone oxidoreductase chain 4, chloroplastic (500 aa).

14 helical membrane passes run 4–24 (FPWL…IFLL), 37–57 (LCIC…HFQL), 87–107 (IGPI…AWPV), 111–131 (AQLF…SFSS), 134–154 (LLLF…LLSM), 167–187 (FILY…GIGL), 208–228 (ALEV…LPII), 242–262 (HYST…YGLV), 272–292 (AHCL…IYAA), 305–325 (IAYS…SLSD), 330–350 (GAIL…FLAG), 386–406 (LALP…GIIT), 416–436 (ILIA…SLSM), and 462–482 (LFVS…PDFV).

It belongs to the complex I subunit 4 family.

Its subcellular location is the plastid. The protein resides in the chloroplast thylakoid membrane. It catalyses the reaction a plastoquinone + NADH + (n+1) H(+)(in) = a plastoquinol + NAD(+) + n H(+)(out). The catalysed reaction is a plastoquinone + NADPH + (n+1) H(+)(in) = a plastoquinol + NADP(+) + n H(+)(out). This chain is NAD(P)H-quinone oxidoreductase chain 4, chloroplastic, found in Oenothera biennis (German evening primrose).